A 603-amino-acid chain; its full sequence is Elongation factor 4 (603 aa).

The 183-residue stretch at 6 to 188 (SKIRNFCIIA…QIVKKIPAPT (183 aa)) folds into the tr-type G domain. GTP contacts are provided by residues 18–23 (DHGKST) and 135–138 (NKVD).

Belongs to the TRAFAC class translation factor GTPase superfamily. Classic translation factor GTPase family. LepA subfamily.

The protein localises to the cell membrane. It carries out the reaction GTP + H2O = GDP + phosphate + H(+). In terms of biological role, required for accurate and efficient protein synthesis under certain stress conditions. May act as a fidelity factor of the translation reaction, by catalyzing a one-codon backward translocation of tRNAs on improperly translocated ribosomes. Back-translocation proceeds from a post-translocation (POST) complex to a pre-translocation (PRE) complex, thus giving elongation factor G a second chance to translocate the tRNAs correctly. Binds to ribosomes in a GTP-dependent manner. This Agathobacter rectalis (strain ATCC 33656 / DSM 3377 / JCM 17463 / KCTC 5835 / VPI 0990) (Eubacterium rectale) protein is Elongation factor 4.